A 1828-amino-acid polypeptide reads, in one-letter code: Chromodomain-helicase-DNA-binding protein 2 (1828 aa).

Residues 1–14 (MMRNKDKSQEEDSS) are compositionally biased toward basic and acidic residues. Residues 1–243 (MMRNKDKSQE…EDDDFETDSD (243 aa)) are disordered. Low complexity predominate over residues 15 to 75 (LHSNASSHSA…SESESAGSKS (61 aa)). 3 stretches are compositionally biased toward basic and acidic residues: residues 81 to 101 (EAKE…KMWE), 115 to 128 (SRQE…KEEA), and 146 to 155 (KKQEKWKQEP). The segment covering 175-204 (VKARRPVPRRTVPKPRVKKQPKTQRGKRKK) has biased composition (basic residues). Phosphoserine is present on residues Ser-207 and Ser-208. Positions 234 to 243 (EDDDFETDSD) are enriched in acidic residues. Residue Thr-240 is modified to Phosphothreonine. Ser-242 is modified (phosphoserine). 2 consecutive Chromo domains span residues 261-353 (ETIE…QWLG) and 378-456 (QIVE…IPTR). One can recognise a Helicase ATP-binding domain in the interval 496–666 (AHSWCKNNSV…WSLLHFIMPE (171 aa)). 509–516 (DEMGLGKT) contacts ATP. Positions 617-620 (DEAH) match the DEAH box motif. The Helicase C-terminal domain occupies 795–946 (LLDKLLTRLR…HLVIQRMDTT (152 aa)). 4 disordered regions span residues 1030 to 1124 (EDEE…RSVR), 1331 to 1462 (VTGG…DEDD), 1556 to 1638 (HKKR…ADRG), and 1680 to 1828 (HMDA…VRKT). A compositionally biased stretch (basic and acidic residues) spans 1037-1065 (ERPHKDWDEIIPEEQRKKVEEEERQKELE). Ser-1085, Ser-1087, Ser-1365, and Ser-1386 each carry phosphoserine. Positions 1347–1371 (KKENKVPRLKEEHGIELSSPRHSDN) are enriched in basic and acidic residues. Composition is skewed to basic and acidic residues over residues 1396-1431 (ENKE…KSGD) and 1565-1574 (EQKKKDDVTG). Positions 1464–1566 (LDQETFSICK…KKRSQEEEEQ (103 aa)) are CHD1 helical C-terminal domain (CHCT). The span at 1584–1601 (SGSSRDSLISQSHTSHNL) shows a compositional bias: polar residues. Basic and acidic residues-rich tracts occupy residues 1698–1720 (RPYD…DRHH), 1739–1749 (QDFRRMSDHRP), 1760–1772 (DHYR…KLGE), and 1795–1814 (SPHD…RSLE). The residue at position 1807 (Ser-1807) is a Phosphoserine.

It belongs to the SNF2/RAD54 helicase family. As to quaternary structure, interacts with MYOD1. Interacts with histone H3.3.

The protein resides in the nucleus. The enzyme catalyses ATP + H2O = ADP + phosphate + H(+). Its function is as follows. ATP-dependent chromatin-remodeling factor that specifically binds to the promoter of target genes, leading to chromatin remodeling, possibly by promoting deposition of histone H3.3. Involved in myogenesis via interaction with MYOD1: binds to myogenic gene regulatory sequences and mediates incorporation of histone H3.3 prior to the onset of myogenic gene expression, promoting their expression. The chain is Chromodomain-helicase-DNA-binding protein 2 (CHD2) from Homo sapiens (Human).